Consider the following 29-residue polypeptide: Cyclotide cter-N (29 aa).

The cyclopeptide (Gly-Asn) cross-link spans 1-29 (GSAFCGETCVLGTCYTPDCSCTALVCLKN). Disulfide bonds link Cys5–Cys19, Cys9–Cys21, and Cys14–Cys26.

Post-translationally, this is a cyclic peptide.

It localises to the secreted. Functionally, probably participates in a plant defense mechanism. In Clitoria ternatea (Butterfly pea), this protein is Cyclotide cter-N.